Reading from the N-terminus, the 30-residue chain is Diuretic hormone 2 (30 aa).

Valine 30 is subject to Valine amide.

It belongs to the sauvagine/corticotropin-releasing factor/urotensin I family.

Its subcellular location is the secreted. Functionally, regulation of fluid secretion. In Manduca sexta (Tobacco hawkmoth), this protein is Diuretic hormone 2.